A 592-amino-acid chain; its full sequence is Delta-like protein 3 (592 aa).

The signal sequence occupies residues 1 to 32; the sequence is MVSLQVSPLSQTLILAFLLPQALPAGVFELQI. At 33–490 the chain is on the extracellular side; it reads HSFGPGPGLG…LRQADPQRFL (458 aa). One can recognise a DSL domain in the interval 174–213; that stretch reads ARCEPPAVGAACARLCRSRSAPSRCGPGLRPCTPFPDECE. EGF-like domains follow at residues 214-247, 272-308, 310-349, 351-387, 389-425, and 427-463; these read APSV…PLCT, GPGP…LRCE, SGVT…SNCE, RVDR…PRCE, DLDD…RDCR, and RADP…VRCE. Intrachain disulfides connect cysteine 218/cysteine 229, cysteine 222/cysteine 235, cysteine 237/cysteine 246, cysteine 276/cysteine 287, cysteine 281/cysteine 296, cysteine 298/cysteine 307, cysteine 314/cysteine 325, cysteine 319/cysteine 337, cysteine 339/cysteine 348, cysteine 355/cysteine 366, cysteine 360/cysteine 375, cysteine 377/cysteine 386, cysteine 393/cysteine 404, cysteine 398/cysteine 413, cysteine 415/cysteine 424, cysteine 431/cysteine 442, cysteine 436/cysteine 451, and cysteine 453/cysteine 462. A helical transmembrane segment spans residues 491–511; that stretch reads LPPALGLLVAAGLAGAALLVI. Over 512-592 the chain is Cytoplasmic; that stretch reads HVRRRGPGQD…REDWLIQVLF (81 aa). Positions 548 to 567 are disordered; that stretch reads QDGAGDGPSSSADWNHPEDG.

As to quaternary structure, can bind and activate Notch-1 or another Notch receptor. Post-translationally, ubiquitinated by MIB (MIB1 or MIB2), leading to its endocytosis and subsequent degradation. As to expression, predominantly expressed in the neuroectoderm and paraxial mesoderm during embryogenesis.

The protein resides in the membrane. Functionally, inhibits primary neurogenesis. May be required to divert neurons along a specific differentiation pathway. Plays a role in the formation of somite boundaries during segmentation of the paraxial mesoderm. The protein is Delta-like protein 3 (Dll3) of Mus musculus (Mouse).